We begin with the raw amino-acid sequence, 149 residues long: Transcriptional repressor NrdR (149 aa).

Residues 3–34 fold into a zinc finger; the sequence is CPFCSATDTKVIDSRLVAEGHQVRRRRECTEC. The region spanning 49–139 is the ATP-cone domain; the sequence is PRVIKRDGSR…VYRAFEDVSE (91 aa).

It belongs to the NrdR family. The cofactor is Zn(2+).

Negatively regulates transcription of bacterial ribonucleotide reductase nrd genes and operons by binding to NrdR-boxes. This Shewanella baltica (strain OS223) protein is Transcriptional repressor NrdR.